The following is a 507-amino-acid chain: Secreted lipase ARB_01498 (507 aa).

The signal sequence occupies residues 1–21 (MFVQLLTYGLVAASTLQGVFA). Ser196 serves as the catalytic Acyl-ester intermediate. Residues Asn262, Asn321, Asn358, and Asn416 are each glycosylated (N-linked (GlcNAc...) asparagine).

It belongs to the type-B carboxylesterase/lipase family.

It localises to the secreted. It catalyses the reaction a triacylglycerol + H2O = a diacylglycerol + a fatty acid + H(+). The chain is Secreted lipase ARB_01498 from Arthroderma benhamiae (strain ATCC MYA-4681 / CBS 112371) (Trichophyton mentagrophytes).